A 320-amino-acid polypeptide reads, in one-letter code: Ferrochelatase (320 aa).

Fe cation is bound by residues histidine 194 and glutamate 275.

The protein belongs to the ferrochelatase family.

The protein resides in the cytoplasm. It catalyses the reaction heme b + 2 H(+) = protoporphyrin IX + Fe(2+). Its pathway is porphyrin-containing compound metabolism; protoheme biosynthesis; protoheme from protoporphyrin-IX: step 1/1. Catalyzes the ferrous insertion into protoporphyrin IX. The chain is Ferrochelatase from Vibrio cholerae serotype O1 (strain ATCC 39315 / El Tor Inaba N16961).